The sequence spans 196 residues: Oplophorus-luciferin 2-monooxygenase catalytic subunit (196 aa).

The first 27 residues, 1 to 27, serve as a signal peptide directing secretion; the sequence is MAYSTLFIIALTAVVTQASSTQKSNLT.

In terms of assembly, heterotetramer of a catalytic 19 kDa and a non-catalytic 35 kDa subunit.

The protein resides in the secreted. It carries out the reaction coelenterazine + O2 = coelenteramide + hnu + CO2. With respect to regulation, inhibited by micromolar Cu(2+). Its function is as follows. Catalytic subunit of oplophorus-luciferin 2-monooxygenase. Oxidoreductase that converts coelenterazine (the oplophorus luciferin) to coelenteramide under emission of blue light with a maximum at 454 nm. Is also active with bisdeoxycoelenterazine. This Oplophorus gracilirostris (Luminous shrimp) protein is Oplophorus-luciferin 2-monooxygenase catalytic subunit.